The following is a 157-amino-acid chain: Probable succinate transporter subunit YjjB (157 aa).

4 consecutive transmembrane segments (helical) span residues 8-28, 50-70, 87-107, and 129-149; these read LALAQDMILAAIPAVGFAMVF, MILMTSGLNIEWSTFMASMLV, VFTVAAVIPMFPGISAYTAMI, and FLTASSIVGALSIGLSIPGLW.

Belongs to the ThrE exporter (TC 2.A.79) family. The transporter is composed of YjjB and YjjP.

The protein resides in the cell inner membrane. In terms of biological role, involved in succinate export with YjjP. Both proteins are required for export. The polypeptide is Probable succinate transporter subunit YjjB (Shigella flexneri serotype 5b (strain 8401)).